A 393-amino-acid polypeptide reads, in one-letter code: MATGGSGGGGGGGGGGDDVHGLKFGKKIYFEQDAAASASAAAVESSSTSSGGGGKKGKGVAAAAAPPPPLPPRCQVEGCGVDLSGVKPYYCRHKVCYMHAKEPIVVVAGLEQRFCQQCSRFHQLPEFDQEKKSCRRRLAGHNERRRKPTPGPLSSRYGRLAASFHEEPGRSRSFVVDFSYPRVPSSVRDAWPAIQPSDRMSGSIQWQGGHELHPHRSAVAGYSDHHAFSSHGGSAAGAPMLHHPAFELTSGGCLAGVATDSSCALSLLSTQPWDTTQSTSSHNRSPPMSSTASAFGGGNNPVSPSVMASNYMAASPGWNSSSRGHDGARNVHLPPPHGVVLNEVPPGSVHHGHFSGELELALQGGAPSNRPEAEHGSGSGAFSHSTNAMNWSL.

A compositionally biased stretch (low complexity) spans 40–49 (AAAVESSSTS). The disordered stretch occupies residues 40-67 (AAAVESSSTSSGGGGKKGKGVAAAAAPP). An SBP-type zinc finger spans residues 71–148 (PPRCQVEGCG…AGHNERRRKP (78 aa)). Zn(2+)-binding residues include C74, C79, C96, H99, C115, C118, H122, and C134. The short motif at 131-147 (KKSCRRRLAGHNERRRK) is the Bipartite nuclear localization signal element. Residues 137 to 148 (RLAGHNERRRKP) are compositionally biased toward basic residues. Disordered stretches follow at residues 137 to 158 (RLAGHNERRRKPTPGPLSSRYG), 273 to 301 (WDTTQSTSSHNRSPPMSSTASAFGGGNNP), and 317 to 393 (GWNS…NWSL). Polar residues-rich tracts occupy residues 273–293 (WDTTQSTSSHNRSPPMSSTAS) and 380–393 (GAFSHSTNAMNWSL).

Expressed in young panicles.

Its subcellular location is the nucleus. Functionally, trans-acting factor that binds specifically to the consensus nucleotide sequence 5'-TNCGTACAA-3'. May be involved in panicle development. The sequence is that of Squamosa promoter-binding-like protein 17 (SPL17) from Oryza sativa subsp. japonica (Rice).